We begin with the raw amino-acid sequence, 323 residues long: Arginase (323 aa).

Residues His119, Asp142, His144, and Asp146 each coordinate Mn(2+). Residues 144–148 (HADIN), 155–157 (SKN), and Asp198 each bind substrate. Mn(2+) contacts are provided by Asp247 and Asp249. 2 residues coordinate substrate: Thr261 and Glu292.

The protein belongs to the arginase family. As to quaternary structure, homotrimer. Mn(2+) is required as a cofactor.

It catalyses the reaction L-arginine + H2O = urea + L-ornithine. Its pathway is nitrogen metabolism; urea cycle; L-ornithine and urea from L-arginine: step 1/1. This Schizosaccharomyces pombe (strain 972 / ATCC 24843) (Fission yeast) protein is Arginase (aru1).